The chain runs to 284 residues: Bifunctional protein FolD (284 aa).

NADP(+) contacts are provided by residues 165 to 167, Ser-190, and Val-231; that span reads GRS.

Belongs to the tetrahydrofolate dehydrogenase/cyclohydrolase family. Homodimer.

It catalyses the reaction (6R)-5,10-methylene-5,6,7,8-tetrahydrofolate + NADP(+) = (6R)-5,10-methenyltetrahydrofolate + NADPH. It carries out the reaction (6R)-5,10-methenyltetrahydrofolate + H2O = (6R)-10-formyltetrahydrofolate + H(+). Its pathway is one-carbon metabolism; tetrahydrofolate interconversion. Catalyzes the oxidation of 5,10-methylenetetrahydrofolate to 5,10-methenyltetrahydrofolate and then the hydrolysis of 5,10-methenyltetrahydrofolate to 10-formyltetrahydrofolate. This is Bifunctional protein FolD from Bacillus licheniformis (strain ATCC 14580 / DSM 13 / JCM 2505 / CCUG 7422 / NBRC 12200 / NCIMB 9375 / NCTC 10341 / NRRL NRS-1264 / Gibson 46).